Consider the following 147-residue polypeptide: Allograft inflammatory factor 1 (147 aa).

The residue at position 2 (S2) is an N-acetylserine. At K11 the chain carries N6-acetyllysine. S39 is subject to Phosphoserine. The 36-residue stretch at 45–80 (SKLEAFKKKYMEFDLNEDGGIDIMSLKRMMEKLGVP) folds into the EF-hand 1 domain. Residues D58, N60, and D62 each coordinate Ca(2+). Residues 81 to 115 (KTHLELKKLIMEVSSGPGETFSYSDFLKMMLGKRS) enclose the EF-hand 2; degenerate domain. The disordered stretch occupies residues 128 to 147 (AREQEKPTGLPAKKAISELP).

Phosphorylated on serine residues.

The protein resides in the cytoplasm. It localises to the cytoskeleton. The protein localises to the cell projection. Its subcellular location is the ruffle membrane. It is found in the phagocytic cup. Functionally, may play a role in macrophage activation and function. The polypeptide is Allograft inflammatory factor 1 (AIF1) (Bos taurus (Bovine)).